Reading from the N-terminus, the 585-residue chain is MSNPIQAPDGGQGWPAAALGPAQRAVAWKRLGTEQFDVVVIGGGVVGSGCALDAATRGLKVALVEARDLASGTSSRSSKMFHGGLRYLEQLEFGLVREALYERELSLTTLAPHLVKPLPFLFPLTKRWWERPYIAAGIFLYDRLGGAKSVPAQRHFTRAGALRLSPGLKRSSLIGGIRYYDTVVDDARHTMTVARTAAHYGAVVRCSTQVVALLREGDRVIGVGVRDSENGAVAEVRGHVVVNATGVWTDEIQALSKQRGRFQVRASKGVHVVVPRDRIVSDVAMILRTEKSVMFVIPWGSHWIIGTTDTDWNLDLAHPAATKADIDYILGTVNAVLATPLTHADIDGVYAGLRPLLAGESDDTSKLSREHAVAVPAAGLVAIAGGKYTTYRVMAADAIDAAVQFIPARVAPSITEKVSLLGADGYFALVNQAEHVGALQGLHPYRVRHLLDRYGSLISDVLAMAASDPSLLSPITEAPGYLKVEAAYAAAAEGALHLEDILARRMRISIEYPHRGVDCAREVAEVVAPVLGWTAADIDREVANYMARVEAEVLSQAQPDDVSADMLRASAPEARAEILEPVPLD.

37-65 (DVVVIGGGVVGSGCALDAATRGLKVALVE) is a binding site for FAD.

It belongs to the FAD-dependent glycerol-3-phosphate dehydrogenase family. FAD serves as cofactor.

The protein localises to the cytoplasm. The enzyme catalyses a quinone + sn-glycerol 3-phosphate = dihydroxyacetone phosphate + a quinol. This is Glycerol-3-phosphate dehydrogenase 2 (glpD2) from Mycobacterium bovis (strain ATCC BAA-935 / AF2122/97).